The primary structure comprises 382 residues: F-box/kelch-repeat protein At3g16580 (382 aa).

One can recognise an F-box domain in the interval 9 to 55 (WEFSLSLPWELIEEILSRVPPESLLRFKTVSKQWNALFRDKTFINNH). 2 Kelch repeats span residues 150–196 (KIFA…NIYT) and 334–381 (WIYV…AELQ).

This is F-box/kelch-repeat protein At3g16580 from Arabidopsis thaliana (Mouse-ear cress).